A 358-amino-acid polypeptide reads, in one-letter code: Trans-anol O-methyltransferase 1 (358 aa).

Residues Gly-201, Asp-224, Asp-244, Met-245, and Arg-259 each contribute to the S-adenosyl-L-methionine site. Residue His-262 is the Proton acceptor of the active site.

Belongs to the class I-like SAM-binding methyltransferase superfamily. Cation-independent O-methyltransferase family. COMT subfamily. As to expression, highly expressed in developing fruits. Expressed at low levels in roots, young leaves, buds and flowers.

The catalysed reaction is (E)-anol + S-adenosyl-L-methionine = (E)-anethole + S-adenosyl-L-homocysteine + H(+). It catalyses the reaction (E)-isoeugenol + S-adenosyl-L-methionine = (E)-isomethyleugenol + S-adenosyl-L-homocysteine + H(+). The protein operates within aromatic compound metabolism; phenylpropanoid biosynthesis. Inhibited by zinc and copper. Phenylpropene O-methyltransferase that catalyzes the conversion of trans-anol to trans-anethole and isoeugenol to isomethyleugenol. Phenylpropenes are the primary constituents of various essential plant oils. They are produced as antimicrobial and antianimal compounds, or as floral attractants of pollinators. The sequence is that of Trans-anol O-methyltransferase 1 (AIMT1) from Pimpinella anisum (Anise).